The primary structure comprises 118 residues: Small ribosomal subunit protein uS13 (118 aa).

The tract at residues 91 to 118 (HRRGLPVRGQRTKTNARTRKGPRKPIKK) is disordered.

Belongs to the universal ribosomal protein uS13 family. Part of the 30S ribosomal subunit. Forms a loose heterodimer with protein S19. Forms two bridges to the 50S subunit in the 70S ribosome.

In terms of biological role, located at the top of the head of the 30S subunit, it contacts several helices of the 16S rRNA. In the 70S ribosome it contacts the 23S rRNA (bridge B1a) and protein L5 of the 50S subunit (bridge B1b), connecting the 2 subunits; these bridges are implicated in subunit movement. Contacts the tRNAs in the A and P-sites. The protein is Small ribosomal subunit protein uS13 of Photorhabdus laumondii subsp. laumondii (strain DSM 15139 / CIP 105565 / TT01) (Photorhabdus luminescens subsp. laumondii).